The following is a 484-amino-acid chain: Endoglucanase 9 (484 aa).

The N-terminal stretch at Met-1–Ala-21 is a signal peptide. Asp-77 acts as the Nucleophile in catalysis. Residues His-402, Asp-453, and Glu-462 contribute to the active site.

The protein belongs to the glycosyl hydrolase 9 (cellulase E) family. As to expression, specifically expressed in root cap cells.

Its subcellular location is the secreted. The protein resides in the cell wall. The enzyme catalyses Endohydrolysis of (1-&gt;4)-beta-D-glucosidic linkages in cellulose, lichenin and cereal beta-D-glucans.. This is Endoglucanase 9 (CEL3) from Arabidopsis thaliana (Mouse-ear cress).